A 138-amino-acid polypeptide reads, in one-letter code: 1,4-dihydroxy-2-naphthoyl-CoA hydrolase (138 aa).

Aspartate 13 is an active-site residue.

This sequence belongs to the 4-hydroxybenzoyl-CoA thioesterase family. DHNA-CoA hydrolase subfamily.

It catalyses the reaction 1,4-dihydroxy-2-naphthoyl-CoA + H2O = 1,4-dihydroxy-2-naphthoate + CoA + H(+). It functions in the pathway cofactor biosynthesis; phylloquinone biosynthesis. The protein operates within quinol/quinone metabolism; 1,4-dihydroxy-2-naphthoate biosynthesis; 1,4-dihydroxy-2-naphthoate from chorismate: step 7/7. Catalyzes the hydrolysis of 1,4-dihydroxy-2-naphthoyl-CoA (DHNA-CoA) to 1,4-dihydroxy-2-naphthoate (DHNA), a reaction involved in phylloquinone (vitamin K1) biosynthesis. The polypeptide is 1,4-dihydroxy-2-naphthoyl-CoA hydrolase (Microcystis aeruginosa (strain NIES-843 / IAM M-2473)).